Here is a 400-residue protein sequence, read N- to C-terminus: Subtilisin-like protease 1 (400 aa).

Positions 1 to 20 (MKFSQSLIALAACFLPLIAA) are cleaved as a signal peptide. Residues 21–119 (APVEAQHAKI…IEMDGKVQAN (99 aa)) constitute a propeptide that is removed on maturation. An Inhibitor I9 domain is found at 42–117 (SYIVVFNKGV…AWIEMDGKVQ (76 aa)). N-linked (GlcNAc...) asparagine glycosylation is present at Asn82. One can recognise a Peptidase S8 domain in the interval 128–400 (TWGLGRISHK…NLIAYNGNGA (273 aa)). Residues Asp160, His192, and Ser345 each act as charge relay system in the active site.

It belongs to the peptidase S8 family.

The protein resides in the secreted. Major secreted subtilisin-like serine endopeptidase. Mediates the degradation of collagen, the major structural protein in the mammalian host. Degrades the nonhelical regions of collagen that function in the cross-linking of the helical components. May function as virulence factor involved in epidermal wing necrosis observed in white nose syndrome (WNS) in bats. The chain is Subtilisin-like protease 1 from Pseudogymnoascus destructans (strain ATCC MYA-4855 / 20631-21) (Bat white-nose syndrome fungus).